Reading from the N-terminus, the 368-residue chain is Peptide chain release factor 2 (368 aa).

Position 250 is an N5-methylglutamine (Q250).

The protein belongs to the prokaryotic/mitochondrial release factor family. In terms of processing, methylated by PrmC. Methylation increases the termination efficiency of RF2.

The protein resides in the cytoplasm. Peptide chain release factor 2 directs the termination of translation in response to the peptide chain termination codons UGA and UAA. The protein is Peptide chain release factor 2 of Rickettsia bellii (strain RML369-C).